The sequence spans 152 residues: MARMHARRRGISRSVRPYRTQAPEWSNTDKEAIIKQIVDLRRQGSSTAEIGLVMRDKYGVPSVKLATGKKITQILRDNDLASEIPEDLRNLIEKALGMRKHLAENKRDIHNKRQLMLTESKVRRLVKYYVSSKKLPKDWVYKPETAEILLSK.

Belongs to the universal ribosomal protein uS15 family. In terms of assembly, part of the 30S ribosomal subunit.

The sequence is that of Small ribosomal subunit protein uS15 from Methanospirillum hungatei JF-1 (strain ATCC 27890 / DSM 864 / NBRC 100397 / JF-1).